Reading from the N-terminus, the 297-residue chain is Glycerol-3-phosphate dehydrogenase [NAD(P)+] (297 aa).

NADPH-binding residues include W11, R33, and K79. Sn-glycerol 3-phosphate-binding residues include K79, G107, and S109. A111 is a binding site for NADPH. The sn-glycerol 3-phosphate site is built by K161, D214, S224, R225, and N226. The active-site Proton acceptor is K161. R225 serves as a coordination point for NADPH. Residues V249 and E251 each coordinate NADPH.

This sequence belongs to the NAD-dependent glycerol-3-phosphate dehydrogenase family.

The protein resides in the cytoplasm. The catalysed reaction is sn-glycerol 3-phosphate + NAD(+) = dihydroxyacetone phosphate + NADH + H(+). It carries out the reaction sn-glycerol 3-phosphate + NADP(+) = dihydroxyacetone phosphate + NADPH + H(+). Its pathway is membrane lipid metabolism; glycerophospholipid metabolism. Functionally, catalyzes the reduction of the glycolytic intermediate dihydroxyacetone phosphate (DHAP) to sn-glycerol 3-phosphate (G3P), the key precursor for phospholipid synthesis. This is Glycerol-3-phosphate dehydrogenase [NAD(P)+] from Campylobacter jejuni subsp. jejuni serotype O:23/36 (strain 81-176).